Consider the following 461-residue polypeptide: tRNA modification GTPase MnmE (461 aa).

Arg-23, Glu-88, and Arg-127 together coordinate (6S)-5-formyl-5,6,7,8-tetrahydrofolate. Residues 223 to 383 (GLNTVIVGKP…LKECIKNLFF (161 aa)) enclose the TrmE-type G domain. Residue Asn-233 participates in K(+) binding. GTP contacts are provided by residues 233–238 (NVGKSS), 252–258 (TEIPGTT), and 277–280 (DTAG). Ser-237 provides a ligand contact to Mg(2+). K(+)-binding residues include Thr-252, Ile-254, and Thr-257. Position 258 (Thr-258) interacts with Mg(2+). Lys-461 provides a ligand contact to (6S)-5-formyl-5,6,7,8-tetrahydrofolate.

The protein belongs to the TRAFAC class TrmE-Era-EngA-EngB-Septin-like GTPase superfamily. TrmE GTPase family. In terms of assembly, homodimer. Heterotetramer of two MnmE and two MnmG subunits. K(+) serves as cofactor.

Its subcellular location is the cytoplasm. Its function is as follows. Exhibits a very high intrinsic GTPase hydrolysis rate. Involved in the addition of a carboxymethylaminomethyl (cmnm) group at the wobble position (U34) of certain tRNAs, forming tRNA-cmnm(5)s(2)U34. This chain is tRNA modification GTPase MnmE, found in Clostridium botulinum (strain Okra / Type B1).